Consider the following 213-residue polypeptide: Protein GrpE (213 aa).

The interval 1 to 61 is disordered; sequence MEQGEKQVME…AEKAPTAEEL (61 aa). Positions 13 to 35 are enriched in acidic residues; it reads TYDEPEREQPIEEEAAPQPEEES.

Belongs to the GrpE family. In terms of assembly, homodimer.

It is found in the cytoplasm. Its function is as follows. Participates actively in the response to hyperosmotic and heat shock by preventing the aggregation of stress-denatured proteins, in association with DnaK and GrpE. It is the nucleotide exchange factor for DnaK and may function as a thermosensor. Unfolded proteins bind initially to DnaJ; upon interaction with the DnaJ-bound protein, DnaK hydrolyzes its bound ATP, resulting in the formation of a stable complex. GrpE releases ADP from DnaK; ATP binding to DnaK triggers the release of the substrate protein, thus completing the reaction cycle. Several rounds of ATP-dependent interactions between DnaJ, DnaK and GrpE are required for fully efficient folding. The polypeptide is Protein GrpE (Geobacillus kaustophilus (strain HTA426)).